The primary structure comprises 66 residues: Prophage transcriptional regulatory protein (66 aa).

In Escherichia coli (strain K12), this protein is Prophage transcriptional regulatory protein (croE).